The sequence spans 605 residues: Sodium-independent sulfate anion transporter (605 aa).

Residues 1–50 lie on the Extracellular side of the membrane; the sequence is MPSSLKGLGQAWLSSSSMALSACCSVSAWQKRLPVLAWLPRYSLQWLKMD. The helical transmembrane segment at 51–71 threads the bilayer; the sequence is FIAGLSVGLTVIPQALAYAEV. Position 72 (Ala-72) is a topological domain, cytoplasmic. Residues 73–93 traverse the membrane as a helical segment; the sequence is GLPPQYGLYSAFTGCFVYVFL. At 94 to 98 the chain is on the extracellular side; sequence GTSRD. A helical membrane pass occupies residues 99–119; sequence VTLGPTAIMSLLVSFYTFHEP. Over 120–122 the chain is Cytoplasmic; that stretch reads AYA. A helical membrane pass occupies residues 123–143; that stretch reads VLLTFLSGCIQLAMGLLHLGF. Residues 144 to 146 are Extracellular-facing; the sequence is LLD. A helical membrane pass occupies residues 147 to 167; the sequence is FISCPVIKGFTSAAAIIIGFG. The Cytoplasmic portion of the chain corresponds to 168–196; that stretch reads QIKNLLGLHNIPRQFFLQVYHTFLSVGET. A helical transmembrane segment spans residues 197–217; it reads RLGDAILGLVCMVLLLVLKLM. Residues 218–249 are Extracellular-facing; it reads RDRIPPVHPEMPLCVRLSCGLVWTTATARNAL. A helical membrane pass occupies residues 250–270; that stretch reads VVSFAALVAYSFEVTGYQPFI. The Cytoplasmic portion of the chain corresponds to 271 to 303; the sequence is LTGEIAKGLPPVRVPPFSVTMANGTVSFTRMVQ. Residues 304–324 form a helical membrane-spanning segment; that stretch reads DLGAGLAVVPLIGLLESIAVA. Residues 325–340 lie on the Extracellular side of the membrane; sequence KAFASQNDYHVDANQE. A helical transmembrane segment spans residues 341-361; the sequence is LLAIGLTNMLGSFVSSYPITG. Residues 362–373 lie on the Cytoplasmic side of the membrane; that stretch reads SFGRTAVNAQSG. A helical membrane pass occupies residues 374–394; sequence VCTPAGGLVTGALVLLSLDYL. Over 395 to 397 the chain is Extracellular; sequence TSL. The chain crosses the membrane as a helical span at residues 398–418; it reads FYYIPKAALAAVIIMAVVPLF. Residues 419 to 447 are Cytoplasmic-facing; it reads DTKIFGMLWRVKRLDLLPLCATFLLCFWE. A helical membrane pass occupies residues 448–468; sequence VQYGILAGTLVSTLFLLHFVA. Residues 469-605 lie on the Extracellular side of the membrane; sequence RPKTQVSEGP…PEHKVTLLTA (137 aa). One can recognise an STAS domain in the interval 479-582; it reads VLILQLASGL…EKAEQYVRQE (104 aa).

The protein belongs to the SLC26A/SulP transporter (TC 2.A.53) family.

It is found in the cell membrane. The protein localises to the lysosome membrane. The protein resides in the apical cell membrane. It localises to the basolateral cell membrane. It catalyses the reaction hydrogencarbonate(in) + chloride(out) = hydrogencarbonate(out) + chloride(in). The catalysed reaction is sulfate(in) + H(+)(in) = sulfate(out) + H(+)(out). The enzyme catalyses oxalate(in) + chloride(out) = oxalate(out) + chloride(in). Its function is as follows. Sodium-independent anion exchanger mediating bicarbonate, chloride, sulfate and oxalate transport. Exhibits sodium-independent sulfate anion transporter activity that may cooperate with SLC26A2 to mediate DIDS-sensitive sulfate uptake into high endothelial venules endothelial cells (HEVEC). In the kidney, mediates chloride-bicarbonate exchange, facilitating V-ATPase-mediated acid secretion. May function as a chloride channel, playing an important role in moderating chloride homeostasis and neuronal activity in the cerebellum. The chain is Sodium-independent sulfate anion transporter (Slc26a11) from Cavia porcellus (Guinea pig).